A 163-amino-acid polypeptide reads, in one-letter code: Phosphopantetheine adenylyltransferase (163 aa).

Substrate is bound at residue S11. ATP contacts are provided by residues 11-12 (SF) and H19. Positions 43, 75, and 89 each coordinate substrate. Residues 90-92 (GLR), E100, and 125-131 (YSFLSSS) contribute to the ATP site.

It belongs to the bacterial CoaD family. In terms of assembly, homohexamer. It depends on Mg(2+) as a cofactor.

The protein localises to the cytoplasm. The catalysed reaction is (R)-4'-phosphopantetheine + ATP + H(+) = 3'-dephospho-CoA + diphosphate. It functions in the pathway cofactor biosynthesis; coenzyme A biosynthesis; CoA from (R)-pantothenate: step 4/5. Reversibly transfers an adenylyl group from ATP to 4'-phosphopantetheine, yielding dephospho-CoA (dPCoA) and pyrophosphate. This chain is Phosphopantetheine adenylyltransferase, found in Lysinibacillus sphaericus (strain C3-41).